The sequence spans 474 residues: Glycogen synthase (474 aa).

K12 lines the ADP-alpha-D-glucose pocket.

Belongs to the glycosyltransferase 1 family. Bacterial/plant glycogen synthase subfamily.

The enzyme catalyses [(1-&gt;4)-alpha-D-glucosyl](n) + ADP-alpha-D-glucose = [(1-&gt;4)-alpha-D-glucosyl](n+1) + ADP + H(+). It functions in the pathway glycan biosynthesis; glycogen biosynthesis. Its function is as follows. Synthesizes alpha-1,4-glucan chains using ADP-glucose. The chain is Glycogen synthase from Xanthomonas campestris pv. campestris (strain 8004).